The primary structure comprises 753 residues: MTILNHTLGFPRVGLRRELKKAQESYWAGNSTREELLTVGRELRARHWDQQKQAGIDLLPVGDFAWYDHVLTTSLLLGNVPPRHQNKDGSVDIDTLFRIGRGRAPTGEPAAAAEMTKWFNTNYHYMVPEFVKGQQFKLTWTQLLEEVDEALALGHNVKPVLLGPVTYLWLGKVKGEQFDRLSLLNDILPVYQQVLAELAKRGIEWVQIDEPALVLELPQAWLDAYKPAYDALQGQVKLLLTTYFEGVTPNLDTITALPVQGLHVDLVHGKDDVAELHKRLPSDWLLSAGLINGRNVWRADLTEKYAQIKDIVGKRDLWVASSCSLLHSPIDLSVETRLDAEVKSWFAFALQKCHELALLRDALNSGDTAALAEWSAPIQARRHSTRVHNPAVEKRLAAITAQDSQRANVYEVRAEAQRARFKLPAWPTTTIGSFPQTTEIRTLRLDFKKGNLDANNYRTGIAEHIKQAIVEQERLGLDVLVHGEAERNDMVEYFGEHLDGFVFTQNGWVQSYGSRCVKPPIVIGDISRPAPITVEWAKYAQSLTDKPVKGMLTGPVTILCWSFPREDVSRETIAKQIALALRDEVADLEAAGIGIIQIDEPALREGLPLRRSDWDAYLQWGVEAFRINAAVAKDDTQIHTHMCYCEFNDIMDSIAALDADVITIETSRSDMELLESFEEFDYPNEIGPGVYDIHSPNVPSVEWIEALLKKAAKRIPAERLWVNPDCGLKTRGWPETRAALANMVQAAQNLRRG.

Residues 17–20 and Lys-117 contribute to the 5-methyltetrahydropteroyltri-L-glutamate site; that span reads RELK. L-homocysteine contacts are provided by residues 431–433 and Glu-484; that span reads IGS. Residues 431–433 and Glu-484 contribute to the L-methionine site; that span reads IGS. Residues 515–516 and Trp-561 each bind 5-methyltetrahydropteroyltri-L-glutamate; that span reads RC. L-homocysteine is bound at residue Asp-599. An L-methionine-binding site is contributed by Asp-599. Glu-605 lines the 5-methyltetrahydropteroyltri-L-glutamate pocket. Zn(2+) is bound by residues His-641, Cys-643, and Glu-665. The active-site Proton donor is the His-694. Cys-726 is a binding site for Zn(2+).

It belongs to the vitamin-B12 independent methionine synthase family. It depends on Zn(2+) as a cofactor.

The catalysed reaction is 5-methyltetrahydropteroyltri-L-glutamate + L-homocysteine = tetrahydropteroyltri-L-glutamate + L-methionine. Its pathway is amino-acid biosynthesis; L-methionine biosynthesis via de novo pathway; L-methionine from L-homocysteine (MetE route): step 1/1. Its function is as follows. Catalyzes the transfer of a methyl group from 5-methyltetrahydrofolate to homocysteine resulting in methionine formation. This is 5-methyltetrahydropteroyltriglutamate--homocysteine methyltransferase from Escherichia coli O9:H4 (strain HS).